We begin with the raw amino-acid sequence, 361 residues long: Peptide chain release factor 1 (361 aa).

Residue Q235 is modified to N5-methylglutamine. The interval 284–306 is disordered; the sequence is SQQATAEAMTRKLQVGSGDRSQR.

This sequence belongs to the prokaryotic/mitochondrial release factor family. Post-translationally, methylated by PrmC. Methylation increases the termination efficiency of RF1.

It is found in the cytoplasm. Functionally, peptide chain release factor 1 directs the termination of translation in response to the peptide chain termination codons UAG and UAA. The chain is Peptide chain release factor 1 from Xylella fastidiosa (strain 9a5c).